The chain runs to 632 residues: 1-deoxy-D-xylulose-5-phosphate synthase (632 aa).

Thiamine diphosphate-binding positions include histidine 79 and glycine 120–alanine 122. Residue aspartate 152 participates in Mg(2+) binding. Thiamine diphosphate-binding positions include glycine 153–serine 154, asparagine 181, phenylalanine 293, and glutamate 377. Asparagine 181 is a Mg(2+) binding site.

It belongs to the transketolase family. DXPS subfamily. Homodimer. It depends on Mg(2+) as a cofactor. Thiamine diphosphate serves as cofactor.

It catalyses the reaction D-glyceraldehyde 3-phosphate + pyruvate + H(+) = 1-deoxy-D-xylulose 5-phosphate + CO2. It functions in the pathway metabolic intermediate biosynthesis; 1-deoxy-D-xylulose 5-phosphate biosynthesis; 1-deoxy-D-xylulose 5-phosphate from D-glyceraldehyde 3-phosphate and pyruvate: step 1/1. Its function is as follows. Catalyzes the acyloin condensation reaction between C atoms 2 and 3 of pyruvate and glyceraldehyde 3-phosphate to yield 1-deoxy-D-xylulose-5-phosphate (DXP). The protein is 1-deoxy-D-xylulose-5-phosphate synthase of Phocaeicola vulgatus (strain ATCC 8482 / DSM 1447 / JCM 5826 / CCUG 4940 / NBRC 14291 / NCTC 11154) (Bacteroides vulgatus).